The primary structure comprises 230 residues: MIRSHEHLARKLGIPFRDPGLLRNALTHRSAEGVNNERLEFLGDSVLGFVVTEYLYQRFPSADEGVLSRLRATLVNETSLARIARELELGEYLILGSGELKSGGYRRDSILSDALEAILGAVLRDQGIDACRALILTLFERPLSALSLDDWKKDPKTRLQELMQGRGLPLPVYTLIDQSGLPHDQHFRVRCEVPLAVEPCVGEGSSRKKAEQQAAENMLSRLSDQSRFRV.

The region spanning 5–127 (HEHLARKLGI…ILGAVLRDQG (123 aa)) is the RNase III domain. E40 contacts Mg(2+). The active site involves D44. Residues D113 and E116 each coordinate Mg(2+). E116 is an active-site residue. Residues 154–224 (DPKTRLQELM…AENMLSRLSD (71 aa)) enclose the DRBM domain. Residues 202–230 (GEGSSRKKAEQQAAENMLSRLSDQSRFRV) are disordered.

This sequence belongs to the ribonuclease III family. In terms of assembly, homodimer. The cofactor is Mg(2+).

It localises to the cytoplasm. The enzyme catalyses Endonucleolytic cleavage to 5'-phosphomonoester.. In terms of biological role, digests double-stranded RNA. Involved in the processing of primary rRNA transcript to yield the immediate precursors to the large and small rRNAs (23S and 16S). Processes some mRNAs, and tRNAs when they are encoded in the rRNA operon. Processes pre-crRNA and tracrRNA of type II CRISPR loci if present in the organism. This is Ribonuclease 3 from Methylococcus capsulatus (strain ATCC 33009 / NCIMB 11132 / Bath).